Here is a 232-residue protein sequence, read N- to C-terminus: Sugar fermentation stimulation protein homolog (232 aa).

Belongs to the SfsA family.

In Shouchella clausii (strain KSM-K16) (Alkalihalobacillus clausii), this protein is Sugar fermentation stimulation protein homolog.